Reading from the N-terminus, the 192-residue chain is Small ribosomal subunit protein uS4B (192 aa).

Residues 83–145 (RRLDNLVYRL…SRKIQTYASN (63 aa)) form the S4 RNA-binding domain.

The protein belongs to the universal ribosomal protein uS4 family. As to quaternary structure, part of the 30S ribosomal subunit. Contacts protein S5. The interaction surface between S4 and S5 is involved in control of translational fidelity.

Functionally, one of the primary rRNA binding proteins, it binds directly to 16S rRNA where it nucleates assembly of the body of the 30S subunit. Its function is as follows. With S5 and S12 plays an important role in translational accuracy. The sequence is that of Small ribosomal subunit protein uS4B (rpsD2) from Clostridium acetobutylicum (strain ATCC 824 / DSM 792 / JCM 1419 / IAM 19013 / LMG 5710 / NBRC 13948 / NRRL B-527 / VKM B-1787 / 2291 / W).